The following is a 536-amino-acid chain: Cytochrome P450 78A7 (536 aa).

Residues 36–56 (LFLAVVFLSIVTWALAGGGGV) traverse the membrane as a helical segment. Cys481 lines the heme pocket.

Belongs to the cytochrome P450 family. Heme serves as cofactor.

The protein localises to the membrane. Functionally, functions probably in association with CYP78A5 in regulating relative growth of the shoot apical meristem and plant organs via a non-cell-autonomous signal. The chain is Cytochrome P450 78A7 (CYP78A7) from Arabidopsis thaliana (Mouse-ear cress).